The following is a 90-amino-acid chain: Progonadoliberin-1 (90 aa).

Positions 1-24 are cleaved as a signal peptide; the sequence is MSRHVTVVLLLAIVLLLSSHMIHG. Glutamine 25 bears the Pyrrolidone carboxylic acid mark. Glycine 34 is modified (glycine amide).

Belongs to the GnRH family. In terms of tissue distribution, forebrain.

It is found in the secreted. Its function is as follows. Stimulates the secretion of gonadotropins. The sequence is that of Progonadoliberin-1 (gnrh1) from Aquarana catesbeiana (American bullfrog).